Here is a 359-residue protein sequence, read N- to C-terminus: Phospho-N-acetylmuramoyl-pentapeptide-transferase (359 aa).

10 consecutive transmembrane segments (helical) span residues Q3–I23, V55–F75, I80–I100, T117–F137, I156–A176, L187–F207, L231–A251, I255–T275, I280–I300, and F334–L354.

It belongs to the glycosyltransferase 4 family. MraY subfamily. Requires Mg(2+) as cofactor.

The protein localises to the cell membrane. It carries out the reaction UDP-N-acetyl-alpha-D-muramoyl-L-alanyl-gamma-D-glutamyl-meso-2,6-diaminopimeloyl-D-alanyl-D-alanine + di-trans,octa-cis-undecaprenyl phosphate = di-trans,octa-cis-undecaprenyl diphospho-N-acetyl-alpha-D-muramoyl-L-alanyl-D-glutamyl-meso-2,6-diaminopimeloyl-D-alanyl-D-alanine + UMP. The protein operates within cell wall biogenesis; peptidoglycan biosynthesis. In terms of biological role, catalyzes the initial step of the lipid cycle reactions in the biosynthesis of the cell wall peptidoglycan: transfers peptidoglycan precursor phospho-MurNAc-pentapeptide from UDP-MurNAc-pentapeptide onto the lipid carrier undecaprenyl phosphate, yielding undecaprenyl-pyrophosphoryl-MurNAc-pentapeptide, known as lipid I. This chain is Phospho-N-acetylmuramoyl-pentapeptide-transferase, found in Mycobacterium tuberculosis (strain ATCC 25177 / H37Ra).